The primary structure comprises 153 residues: MASFKSFLLLALLAIVSEAAPPGHASHGEADSKCPLMVKVLDAVRGIPAANLLVNVFRQTESGKWEQITSGKTTELGEIHNLTTDEQFTEGVYKIEFATKAFWGKLGLSPFHEYVDVVFTANDAGHRHYTIAVLLTPYSFSSTAIVSEPHDDL.

An N-terminal signal peptide occupies residues 1–19 (MASFKSFLLLALLAIVSEA). The residue at position 34 (C34) is a Sulfocysteine. L-thyroxine contacts are provided by K39 and E78. Residue N81 is glycosylated (N-linked (GlcNAc...) asparagine). L-thyroxine is bound at residue S141.

Belongs to the transthyretin family. As to quaternary structure, homotetramer. Dimer of dimers. In the homotetramer, subunits assemble around a central channel that can accommodate two ligand molecules. Interacts with rbp4. In terms of processing, sulfonation of the reactive cysteine Cys-34 enhances the stability of the native conformation of TTR, avoiding misassembly of the protein leading to amyloid formation. As to expression, detected in plasma (at protein level). Expressed during metamorphosis in tadpole liver, but not in tadpole brain nor adult liver. Between 1.5 and 3 days of development, also expressed in the mesoderm of the kidney.

It localises to the secreted. Thyroid hormone-binding protein, with a much higher binding affinity for triiodothyronine (T3) than for thyroxine (T4). Probably transports triiodothyronine from the bloodstream to the brain. The protein is Transthyretin (ttr) of Xenopus laevis (African clawed frog).